A 610-amino-acid polypeptide reads, in one-letter code: Protein SAN1 (610 aa).

Polar residues predominate over residues 1–10; that stretch reads MSESGQEQNR. 2 disordered regions span residues 1-36 and 176-231; these read MSESGQEQNRGTNTSPNNAENNNNSNAASGPLNGGA and VDST…PSIP. Residues 11 to 36 are compositionally biased toward low complexity; sequence GTNTSPNNAENNNNSNAASGPLNGGA. Basic and acidic residues predominate over residues 194–203; sequence EGTKKRKDNE. The span at 210-223 shows a compositional bias: polar residues; that stretch reads TADNDSNPSITNAT. The RING-type zinc-finger motif lies at 240-280; that stretch reads NDEETNPSYKHSPIKLPCGHIFGRECIYKWSRLENSCPLCR. Disordered regions lie at residues 318–348, 360–453, 471–502, 514–554, and 569–610; these read TAVNSTNENSSAPSENTSNTTVPTIGNASSG, VPQN…TDPH, GTSDTSATTAPGAQTVHNQGRNDSSSSDTTQG, GHFT…GVAS, and NNNS…RSSQ. Residues 319-348 show a composition bias toward polar residues; sequence AVNSTNENSSAPSENTSNTTVPTIGNASSG. 2 stretches are compositionally biased toward low complexity: residues 384-406 and 425-447; these read NGPSSTTQNPPSNSGGSNNNQSP and PSASDSSASPSAANGPNSNNTSS. Positions 471–492 are enriched in polar residues; it reads GTSDTSATTAPGAQTVHNQGRN. Low complexity predominate over residues 493–502; that stretch reads DSSSSDTTQG. Composition is skewed to polar residues over residues 533 to 554 and 592 to 610; these read QQRGGSTGENNRNNLFSSGVAS and DTTIHNDVPNDNNEQRSSQ.

Functionally, plays a specific role in mating-type regulation of yeast, by acting post-translationally to control the stability or activity of the SIR4 proteins. This Saccharomyces cerevisiae (strain ATCC 204508 / S288c) (Baker's yeast) protein is Protein SAN1 (SAN1).